The following is a 37-amino-acid chain: Large ribosomal subunit protein bL36 (37 aa).

Belongs to the bacterial ribosomal protein bL36 family.

This is Large ribosomal subunit protein bL36 from Deinococcus geothermalis (strain DSM 11300 / CIP 105573 / AG-3a).